A 181-amino-acid chain; its full sequence is Protein GrpE (181 aa).

The span at 1–12 shows a compositional bias: polar residues; that stretch reads MENTQENPTTPS. The interval 1 to 33 is disordered; it reads MENTQENPTTPSAEDIGSEKQAAQGAAPAAEAA. The segment covering 21–33 has biased composition (low complexity); sequence QAAQGAAPAAEAA.

The protein belongs to the GrpE family. In terms of assembly, homodimer.

It localises to the cytoplasm. In terms of biological role, participates actively in the response to hyperosmotic and heat shock by preventing the aggregation of stress-denatured proteins, in association with DnaK and GrpE. It is the nucleotide exchange factor for DnaK and may function as a thermosensor. Unfolded proteins bind initially to DnaJ; upon interaction with the DnaJ-bound protein, DnaK hydrolyzes its bound ATP, resulting in the formation of a stable complex. GrpE releases ADP from DnaK; ATP binding to DnaK triggers the release of the substrate protein, thus completing the reaction cycle. Several rounds of ATP-dependent interactions between DnaJ, DnaK and GrpE are required for fully efficient folding. The sequence is that of Protein GrpE from Burkholderia cenocepacia (strain HI2424).